We begin with the raw amino-acid sequence, 591 residues long: uncharacterized protein (591 aa).

Residues 1 to 10 (MSIRGVGGNG) are compositionally biased toward gly residues. Disordered regions lie at residues 1–37 (MSIR…KVED), 110–135 (RSSA…GYRE), 324–344 (EESG…AQGP), and 487–517 (GHYQ…TPPL). The segment covering 11–32 (NSRIPSHNGDGSNRRSQNTKGN) has biased composition (polar residues). The segment covering 110-132 (RSSATRAAESGSSSRTARGASSG) has biased composition (low complexity). The segment covering 490–507 (QDPRASDYDLPRASDYDL) has biased composition (basic and acidic residues).

The protein to C.muridarum TC_0268.

This is an uncharacterized protein from Chlamydia trachomatis serovar D (strain ATCC VR-885 / DSM 19411 / UW-3/Cx).